The primary structure comprises 187 residues: Large ribosomal subunit protein uL5 (187 aa).

The protein belongs to the universal ribosomal protein uL5 family. In terms of assembly, part of the 50S ribosomal subunit; part of the 5S rRNA/L5/L18/L25 subcomplex. Contacts the 5S rRNA and the P site tRNA. Forms a bridge to the 30S subunit in the 70S ribosome.

Functionally, this is one of the proteins that bind and probably mediate the attachment of the 5S RNA into the large ribosomal subunit, where it forms part of the central protuberance. In the 70S ribosome it contacts protein S13 of the 30S subunit (bridge B1b), connecting the 2 subunits; this bridge is implicated in subunit movement. Contacts the P site tRNA; the 5S rRNA and some of its associated proteins might help stabilize positioning of ribosome-bound tRNAs. The protein is Large ribosomal subunit protein uL5 of Mycobacterium avium (strain 104).